The sequence spans 64 residues: Insect toxin OsI1 (64 aa).

The LCN-type CS-alpha/beta domain occupies D1–G61. Cystine bridges form between C10–C60, C14–C35, C21–C42, and C25–C44. At G61 the chain carries Glycine amide.

This sequence belongs to the long (4 C-C) scorpion toxin superfamily. Sodium channel inhibitor family. Beta subfamily. Expressed by the venom gland.

The protein resides in the secreted. Functionally, depressant insect beta-toxins cause a transient contraction paralysis followed by a slow flaccid paralysis. They bind voltage-independently at site-4 of sodium channels (Nav) and shift the voltage of activation toward more negative potentials thereby affecting sodium channel activation and promoting spontaneous and repetitive firing. This toxin is active only on insects. This is Insect toxin OsI1 from Orthochirus scrobiculosus (Central Asian scorpion).